A 234-amino-acid polypeptide reads, in one-letter code: Small ribosomal subunit protein uS3 (234 aa).

The KH type-2 domain occupies 39-107; sequence VRDYLKKKLS…PVHVNIEEVR (69 aa). Residues 212 to 234 are disordered; that stretch reads EQPAAAEQEKRGKKSGVKHAAAS.

It belongs to the universal ribosomal protein uS3 family. In terms of assembly, part of the 30S ribosomal subunit. Forms a tight complex with proteins S10 and S14.

In terms of biological role, binds the lower part of the 30S subunit head. Binds mRNA in the 70S ribosome, positioning it for translation. The sequence is that of Small ribosomal subunit protein uS3 from Thiobacillus denitrificans (strain ATCC 25259 / T1).